Here is a 300-residue protein sequence, read N- to C-terminus: Probable alpha-L-glutamate ligase (300 aa).

The ATP-grasp domain occupies 104–287 (LQLLARQGID…IASRMIAWIE (184 aa)). ATP-binding positions include lysine 141, 178 to 179 (EY), aspartate 187, and 211 to 213 (RSN). Mg(2+) is bound by residues aspartate 248, glutamate 260, and asparagine 262. Residues aspartate 248, glutamate 260, and asparagine 262 each coordinate Mn(2+).

It belongs to the RimK family. Requires Mg(2+) as cofactor. The cofactor is Mn(2+).

The polypeptide is Probable alpha-L-glutamate ligase (Klebsiella pneumoniae (strain 342)).